The chain runs to 332 residues: Holliday junction branch migration complex subunit RuvB (332 aa).

A large ATPase domain (RuvB-L) region spans residues 1–181 (MARILDNDVM…FGITGHMEYY (181 aa)). ATP-binding positions include Leu-20, Arg-21, Gly-62, Lys-65, Thr-66, Thr-67, 128–130 (EDF), Arg-171, Tyr-181, and Arg-218. Thr-66 lines the Mg(2+) pocket. The segment at 182 to 252 (QEKDLTEIVE…ITDRALTMLD (71 aa)) is small ATPAse domain (RuvB-S). The tract at residues 255–332 (REGLDYIDQK…RHLGYPYQNT (78 aa)) is head domain (RuvB-H). DNA is bound by residues Arg-291, Arg-310, Arg-312, and Arg-315.

The protein belongs to the RuvB family. Homohexamer. Forms an RuvA(8)-RuvB(12)-Holliday junction (HJ) complex. HJ DNA is sandwiched between 2 RuvA tetramers; dsDNA enters through RuvA and exits via RuvB. An RuvB hexamer assembles on each DNA strand where it exits the tetramer. Each RuvB hexamer is contacted by two RuvA subunits (via domain III) on 2 adjacent RuvB subunits; this complex drives branch migration. In the full resolvosome a probable DNA-RuvA(4)-RuvB(12)-RuvC(2) complex forms which resolves the HJ.

It localises to the cytoplasm. The enzyme catalyses ATP + H2O = ADP + phosphate + H(+). Its function is as follows. The RuvA-RuvB-RuvC complex processes Holliday junction (HJ) DNA during genetic recombination and DNA repair, while the RuvA-RuvB complex plays an important role in the rescue of blocked DNA replication forks via replication fork reversal (RFR). RuvA specifically binds to HJ cruciform DNA, conferring on it an open structure. The RuvB hexamer acts as an ATP-dependent pump, pulling dsDNA into and through the RuvAB complex. RuvB forms 2 homohexamers on either side of HJ DNA bound by 1 or 2 RuvA tetramers; 4 subunits per hexamer contact DNA at a time. Coordinated motions by a converter formed by DNA-disengaged RuvB subunits stimulates ATP hydrolysis and nucleotide exchange. Immobilization of the converter enables RuvB to convert the ATP-contained energy into a lever motion, pulling 2 nucleotides of DNA out of the RuvA tetramer per ATP hydrolyzed, thus driving DNA branch migration. The RuvB motors rotate together with the DNA substrate, which together with the progressing nucleotide cycle form the mechanistic basis for DNA recombination by continuous HJ branch migration. Branch migration allows RuvC to scan DNA until it finds its consensus sequence, where it cleaves and resolves cruciform DNA. This is Holliday junction branch migration complex subunit RuvB from Streptococcus pyogenes serotype M12 (strain MGAS9429).